We begin with the raw amino-acid sequence, 523 residues long: Calcium uptake protein 3, mitochondrial (523 aa).

A mitochondrion-targeting transit peptide spans 1–6 (MAALRR). Residues 18-48 (LAPQQPFLSPWGRPAGTAPGMSGRPFSGREE) are disordered. Residues 225–260 (KPHAGFRIAFNMFDTDGNEMVDKKEFLVLQEIFRKK) enclose the EF-hand 1 domain. 6 residues coordinate Ca(2+): Asp-238, Asp-240, Asn-242, Met-244, Asp-246, and Glu-249. Positions 414–429 (ITFDEFRSFFQFLNNL) constitute an EF-hand 2; degenerate domain. Residues 463–498 (LSPHLVNTVFKIFDVDKDDQLSYKEFIGIMKDRLHR) enclose the EF-hand 3 domain. Ca(2+) is bound by residues Asp-476, Asp-478, Asp-480, Gln-482, and Glu-487.

This sequence belongs to the MICU1 family. MICU3 subfamily. As to quaternary structure, heterodimer; disulfide-linked; heterodimerizes with MICU1. Component of the uniplex complex, composed of MCU, EMRE/SMDT1, MICU1 and MICU3 in a 4:4:1:1 stoichiometry.

It localises to the mitochondrion intermembrane space. The protein resides in the mitochondrion inner membrane. Functionally, tissue-specific calcium sensor of the mitochondrial calcium uniporter (MCU) channel, which specifically regulates MCU channel activity in the central nervous system and skeletal muscle. Senses calcium level via its EF-hand domains: compared to MICU1 and MICU2, MICU3 has a higher affinity for calcium. MICU1 and MICU3 form a disulfide-linked heterodimer that stimulates and inhibits MCU activity, depending on the concentration of calcium. At low calcium levels, MICU1 occludes the pore of the MCU channel, preventing mitochondrial calcium uptake. At higher calcium levels, calcium-binding to MICU1 and MICU3 induces a conformational change that weakens MCU-MICU1 interactions and moves the MICU1-MICU3 heterodimer away from the pore, allowing calcium permeation through the MCU channel. The high calcium affinity of MICU3 lowers the calcium threshold necessary for calcium permeation through the MCU channel. The MICU1-MICU3 heterodimer promotes flexibility of neurotransmission in neuronal cells by enhancing mitochondrial calcium uptake in presynapses. It is also required to increase mitochondrial calcium uptake in skeletal muscle cells, thereby increasing ATP production. The polypeptide is Calcium uptake protein 3, mitochondrial (Rattus norvegicus (Rat)).